Consider the following 274-residue polypeptide: 4-hydroxy-3-methylbut-2-enyl diphosphate reductase (274 aa).

Cys12 contacts [4Fe-4S] cluster. (2E)-4-hydroxy-3-methylbut-2-enyl diphosphate is bound by residues His36 and His70. Residues His36 and His70 each coordinate dimethylallyl diphosphate. Isopentenyl diphosphate-binding residues include His36 and His70. Residue Cys92 participates in [4Fe-4S] cluster binding. His120 serves as a coordination point for (2E)-4-hydroxy-3-methylbut-2-enyl diphosphate. His120 is a dimethylallyl diphosphate binding site. His120 contributes to the isopentenyl diphosphate binding site. The active-site Proton donor is the Glu122. Thr158 lines the (2E)-4-hydroxy-3-methylbut-2-enyl diphosphate pocket. Residue Cys186 participates in [4Fe-4S] cluster binding. Residues Ser214, Ser215, Asn216, and Ser258 each contribute to the (2E)-4-hydroxy-3-methylbut-2-enyl diphosphate site. Residues Ser214, Ser215, Asn216, and Ser258 each contribute to the dimethylallyl diphosphate site. Isopentenyl diphosphate contacts are provided by Ser214, Ser215, Asn216, and Ser258.

Belongs to the IspH family. Requires [4Fe-4S] cluster as cofactor.

It catalyses the reaction isopentenyl diphosphate + 2 oxidized [2Fe-2S]-[ferredoxin] + H2O = (2E)-4-hydroxy-3-methylbut-2-enyl diphosphate + 2 reduced [2Fe-2S]-[ferredoxin] + 2 H(+). The enzyme catalyses dimethylallyl diphosphate + 2 oxidized [2Fe-2S]-[ferredoxin] + H2O = (2E)-4-hydroxy-3-methylbut-2-enyl diphosphate + 2 reduced [2Fe-2S]-[ferredoxin] + 2 H(+). It participates in isoprenoid biosynthesis; dimethylallyl diphosphate biosynthesis; dimethylallyl diphosphate from (2E)-4-hydroxy-3-methylbutenyl diphosphate: step 1/1. It functions in the pathway isoprenoid biosynthesis; isopentenyl diphosphate biosynthesis via DXP pathway; isopentenyl diphosphate from 1-deoxy-D-xylulose 5-phosphate: step 6/6. In terms of biological role, catalyzes the conversion of 1-hydroxy-2-methyl-2-(E)-butenyl 4-diphosphate (HMBPP) into a mixture of isopentenyl diphosphate (IPP) and dimethylallyl diphosphate (DMAPP). Acts in the terminal step of the DOXP/MEP pathway for isoprenoid precursor biosynthesis. The protein is 4-hydroxy-3-methylbut-2-enyl diphosphate reductase of Campylobacter concisus (strain 13826).